A 1719-amino-acid polypeptide reads, in one-letter code: Serine/threonine-protein kinase MRCK alpha (1719 aa).

Residues 77 to 343 (FEILKVIGRG…IEDFKKHPFF (267 aa)) enclose the Protein kinase domain. ATP-binding positions include 83 to 91 (IGRGAFGEV) and Lys-106. The Proton acceptor role is filled by Asp-201. Phosphoserine; by autocatalysis occurs at positions 222 and 234. Phosphothreonine; by autocatalysis is present on Thr-240. In terms of domain architecture, AGC-kinase C-terminal spans 344-414 (SGIDWDNIRN…TSSCVLSDRS (71 aa)). 3 coiled-coil regions span residues 437–670 (NNLA…KQKQ), 713–820 (SEIK…WEAQ), and 880–943 (LELQ…SEKG). Residues 999–1049 (THQFFVKSFTAPTKCHQCTSLMVGLIRQGCSCEVCGFSCHITCVNKAPTVC) form a Phorbol-ester/DAG-type zinc finger. Residues 1069 to 1188 (GTAYEGHVRI…WVGVLSELHK (120 aa)) enclose the PH domain. Residues 1214 to 1486 (IKTTQAAAII…RPLNTEGSLN (273 aa)) form the CNH domain. At Ser-1532 the chain carries Phosphoserine. The region spanning 1558 to 1571 (ISNPTNFNHIAHMG) is the CRIB domain. Residues 1579–1719 (LKDLPMNPRP…ESTDRGSWDP (141 aa)) form a disordered region. Polar residues predominate over residues 1591–1606 (SRTVFSGSVSIPSITK). Residues Ser-1598, Ser-1600, Ser-1616, Ser-1638, Ser-1651, Ser-1656, Ser-1680, Ser-1706, and Ser-1708 each carry the phosphoserine modification. Over residues 1612–1627 (GRSMSASSGLSARSSA) the composition is skewed to low complexity. Over residues 1652–1661 (PSEGSLSSGG) the composition is skewed to low complexity.

This sequence belongs to the protein kinase superfamily. AGC Ser/Thr protein kinase family. DMPK subfamily. As to quaternary structure, homodimer and homotetramer via the coiled coil regions. Interacts tightly with GTP-bound but not GDP-bound CDC42. Forms a tripartite complex with MYO18A and LRP35A with the latter acting as an adapter connecting CDC42BPA and MYO18A. LRP35A binding results in activation of CDC42BPA by abolition of its negative autoregulation. Interacts with LURAP1. Interacts (via AGC-kinase C-terminal domain) with FAM89B/LRAP25 (via LRR repeat). Forms a tripartite complex with FAM89B/LRAP25 and LIMK1. Mg(2+) serves as cofactor. Post-translationally, proteolytically cleaved by caspases upon apoptosis induction. The cleavage at Asp-478 by CASP3 increases its kinase activity (in vitro).

It localises to the cytoplasm. Its subcellular location is the cell projection. The protein localises to the lamellipodium. It catalyses the reaction L-seryl-[protein] + ATP = O-phospho-L-seryl-[protein] + ADP + H(+). The catalysed reaction is L-threonyl-[protein] + ATP = O-phospho-L-threonyl-[protein] + ADP + H(+). Its activity is regulated as follows. Maintained in an inactive, closed conformation by an interaction between the kinase domain and the negative autoregulatory C-terminal coiled-coil region. Agonist binding to the phorbol ester binding site disrupts this, releasing the kinase domain to allow N-terminus-mediated dimerization and kinase activation by transautophosphorylation. Inhibited by chelerythrine chloride. Functionally, serine/threonine-protein kinase which is an important downstream effector of CDC42 and plays a role in the regulation of cytoskeleton reorganization and cell migration. Regulates actin cytoskeletal reorganization via phosphorylation of PPP1R12C and MYL9/MLC2. In concert with MYO18A and LRP35A, is involved in modulating lamellar actomyosin retrograde flow that is crucial to cell protrusion and migration. Phosphorylates: PPP1R12A and LIMK2. May play a role in TFRC-mediated iron uptake. In concert with FAM89B/LRAP25 mediates the targeting of LIMK1 to the lamellipodium resulting in its activation and subsequent phosphorylation of CFL1 which is important for lamellipodial F-actin regulation. Triggers the formation of an extrusion apical actin ring required for epithelial extrusion of apoptotic cells. This is Serine/threonine-protein kinase MRCK alpha (Cdc42bpa) from Mus musculus (Mouse).